The chain runs to 697 residues: uncharacterized protein (697 aa).

A coiled-coil region spans residues 516 to 545 (ADQSQNDVVALSSRIDRLTQEVVALQNSEK).

This is an uncharacterized protein from Callospermophilus lateralis (Golden-mantled ground squirrel).